Here is a 543-residue protein sequence, read N- to C-terminus: Thermosome subunit beta (543 aa).

The tract at residues 522 to 543 (TKSSSSSSNPPKSGSSSESSED) is disordered. Over residues 523-543 (KSSSSSSNPPKSGSSSESSED) the composition is skewed to low complexity.

Belongs to the TCP-1 chaperonin family. Forms a Heterooligomeric complex of two stacked eight-membered rings. In terms of processing, the N-terminus is blocked.

Functionally, molecular chaperone; binds unfolded polypeptides in vitro, and has a weak ATPase activity. The sequence is that of Thermosome subunit beta (thsB) from Thermoplasma acidophilum (strain ATCC 25905 / DSM 1728 / JCM 9062 / NBRC 15155 / AMRC-C165).